A 704-amino-acid chain; its full sequence is Polyribonucleotide nucleotidyltransferase (704 aa).

Asp488 and Asp494 together coordinate Mg(2+). Residues 555–614 (PRITTLKINPEKIRDVIGKGGATIRALTEETGTTIELEDDGTVKIASANGDATKEAIRRI) form the KH domain. The S1 motif domain occupies 624 to 692 (GTIYNGKVVR…RQGRVRLSMK (69 aa)).

It belongs to the polyribonucleotide nucleotidyltransferase family. In terms of assembly, component of the RNA degradosome, which is a multiprotein complex involved in RNA processing and mRNA degradation. Mg(2+) serves as cofactor.

The protein resides in the cytoplasm. The catalysed reaction is RNA(n+1) + phosphate = RNA(n) + a ribonucleoside 5'-diphosphate. In terms of biological role, involved in mRNA degradation. Catalyzes the phosphorolysis of single-stranded polyribonucleotides processively in the 3'- to 5'-direction. The chain is Polyribonucleotide nucleotidyltransferase from Shewanella sediminis (strain HAW-EB3).